The following is an 87-amino-acid chain: UPF0250 protein BCc_307 (87 aa).

This sequence belongs to the UPF0250 family.

The sequence is that of UPF0250 protein BCc_307 from Buchnera aphidicola subsp. Cinara cedri (strain Cc).